The primary structure comprises 1502 residues: tRNA (32-2'-O)-methyltransferase regulator trm732 (1502 aa).

The protein belongs to the THADA family.

It is found in the cytoplasm. The protein resides in the nucleus. Together with methyltransferase trm7, methylates the 2'-O-ribose of nucleotides at position 32 of the anticodon loop of substrate tRNAs. The chain is tRNA (32-2'-O)-methyltransferase regulator trm732 from Schizosaccharomyces pombe (strain 972 / ATCC 24843) (Fission yeast).